Reading from the N-terminus, the 565-residue chain is Deformed epidermal autoregulatory factor 1 homolog (565 aa).

Disordered stretches follow at residues 34–62 (GGEA…ETPR) and 162–190 (GLKG…KGGT). Residues 169–181 (PLTPGPQSPPTPL) are compositionally biased toward pro residues. Thr171 carries the post-translational modification Phosphothreonine. Ser176 carries the phosphoserine modification. Position 179 is a phosphothreonine (Thr179). The SAND domain occupies 193–273 (NWDPSVYDSE…QCLIQDGILN (81 aa)). The Nuclear localization signal motif lies at 301 to 316 (KRRKKENELPTTPVKK). The segment at 403-478 (IAPFPEAALP…QLKTLFEQAK (76 aa)) is interaction with LMO4. Thr432 is subject to Phosphothreonine. Ser448 is modified (phosphoserine). Zn(2+) is bound by residues Cys504, Cys507, Cys515, Cys518, Cys524, Cys528, His536, and Cys540. Residues 504–540 (CVNCGREAMSECTGCHKVNYCSTFCQRKDWKDHQHIC) form an MYND-type zinc finger.

As to quaternary structure, homodimer. Isoform 1 and isoform 4 may form a heterodimer. Interacts with LMO2 and CLIM2. Interacts with LMO4; LMO4 blocks export from nucleus. May interact with the corepressors NCOR1 and NCRO2. Identified in a complex with the XRCC5 and XRCC6 heterodimer. Interacts (via the SAND domain) with the DNA-PK complex subunit XRCC6; the interaction is direct and may be inhibited by DNA-binding. Post-translationally, may be phosphorylated by DNA-PK complex in a DNA independent manner (in vitro). Expressed in various tissues and cells such as in peripheral mononuclear cells and hormone-secreting pituitary cells. Expression in pancreatic lymph nodes of patients with type 1 diabetes is 20 times higher than in healthy controls. Highly expressed in fetal and adult brain.

The protein resides in the nucleus. It localises to the cytoplasm. It is found in the secreted. Transcription factor that binds to sequence with multiple copies of 5'-TTC[CG]G-3' present in its own promoter and that of the HNRPA2B1 gene. Down-regulates transcription of these genes. Binds to the retinoic acid response element (RARE) 5'-AGGGTTCACCGAAAGTTCA-3'. Activates the proenkephalin gene independently of promoter binding, probably through protein-protein interaction. When secreted, behaves as an inhibitor of cell proliferation, by arresting cells in the G0 or G1 phase. Required for neural tube closure and skeletal patterning. Regulates epithelial cell proliferation and side-branching in the mammary gland. Controls the expression of peripheral tissue antigens in pancreatic lymph nodes. Isoform 1 displays greater transcriptional activity than isoform 4. Isoform 4 may inhibit transcriptional activity of isoform 1 by interacting with isoform 1 and retaining it in the cytoplasm. Transcriptional activator of EIF4G3. The polypeptide is Deformed epidermal autoregulatory factor 1 homolog (DEAF1) (Homo sapiens (Human)).